Here is a 405-residue protein sequence, read N- to C-terminus: Pyruvate decarboxylase 2 (405 aa).

Residues 232 to 314 are thiamine pyrophosphate binding; the sequence is DSWFNCQKLK…FLINNGGYTI (83 aa). Mg(2+) is bound by residues Asp282, Asn309, and Gly311. Residue Glu315 participates in substrate binding.

This sequence belongs to the TPP enzyme family. As to quaternary structure, homotetramer. A metal cation serves as cofactor. It depends on thiamine diphosphate as a cofactor.

The enzyme catalyses a 2-oxocarboxylate + H(+) = an aldehyde + CO2. This chain is Pyruvate decarboxylase 2 (PDC2), found in Pisum sativum (Garden pea).